A 95-amino-acid chain; its full sequence is Small ribosomal subunit protein bS18 (95 aa).

This sequence belongs to the bacterial ribosomal protein bS18 family. As to quaternary structure, part of the 30S ribosomal subunit. Forms a tight heterodimer with protein bS6.

In terms of biological role, binds as a heterodimer with protein bS6 to the central domain of the 16S rRNA, where it helps stabilize the platform of the 30S subunit. This Rickettsia prowazekii (strain Madrid E) protein is Small ribosomal subunit protein bS18.